A 374-amino-acid polypeptide reads, in one-letter code: 5-pentadecatrienyl resorcinol O-methyltransferase (374 aa).

4 residues coordinate S-adenosyl-L-methionine: aspartate 239, aspartate 261, methionine 262, and lysine 275. The active-site Proton acceptor is the histidine 279.

It belongs to the class I-like SAM-binding methyltransferase superfamily. Cation-independent O-methyltransferase family. COMT subfamily. In terms of assembly, homodimer. Expressed predominantly in root hairs.

It catalyses the reaction (8Z,11Z)-5-(pentadeca-8,11,14-trien-1-yl)resorcinol + S-adenosyl-L-methionine = (8Z,11Z)-5-(pentadeca- 8,11,14-trien-1-yl)resorcinol-3-methyl ether + S-adenosyl-L-homocysteine + H(+). Its function is as follows. O-methyltransferase involved in the biosynthetic pathway of the phytotoxin sorgoleone, a potent broad-spectrum inhibitor active against many agronomically important monocot and dicot weed species. Substrate specificity for alkylresorcinols. Strong preference for a five carbons alkyl side chain. The polypeptide is 5-pentadecatrienyl resorcinol O-methyltransferase (OMT3) (Sorghum bicolor (Sorghum)).